The sequence spans 181 residues: tRNA-splicing endonuclease (181 aa).

Active-site residues include Y118, H126, and K157.

This sequence belongs to the tRNA-intron endonuclease family. Archaeal short subfamily. Homotetramer; although the tetramer contains four active sites, only two participate in the cleavage. Therefore, it should be considered as a dimer of dimers.

The catalysed reaction is pretRNA = a 3'-half-tRNA molecule with a 5'-OH end + a 5'-half-tRNA molecule with a 2',3'-cyclic phosphate end + an intron with a 2',3'-cyclic phosphate and a 5'-hydroxyl terminus.. In terms of biological role, endonuclease that removes tRNA introns. Cleaves pre-tRNA at the 5'- and 3'-splice sites to release the intron. The products are an intron and two tRNA half-molecules bearing 2',3' cyclic phosphate and 5'-OH termini. Recognizes a pseudosymmetric substrate in which 2 bulged loops of 3 bases are separated by a stem of 4 bp. This Hyperthermus butylicus (strain DSM 5456 / JCM 9403 / PLM1-5) protein is tRNA-splicing endonuclease.